We begin with the raw amino-acid sequence, 83 residues long: Putative beta-neurotoxin RjAa15f (83 aa).

The N-terminal stretch at 1-18 is a signal peptide; sequence MKILIFIIASFMLIGVEC. The LCN-type CS-alpha/beta domain maps to 19-82; sequence KEGYPMGRNG…VWDSSNNKCV (64 aa). Disulfide bonds link Cys29–Cys81, Cys33–Cys55, Cys40–Cys62, and Cys44–Cys64.

The protein belongs to the long (4 C-C) scorpion toxin superfamily. Sodium channel inhibitor family. Beta subfamily. Expressed by the venom gland.

It localises to the secreted. Its function is as follows. Beta toxins bind voltage-independently at site-4 of sodium channels (Nav) and shift the voltage of activation toward more negative potentials thereby affecting sodium channel activation and promoting spontaneous and repetitive firing. This chain is Putative beta-neurotoxin RjAa15f, found in Rhopalurus junceus (Caribbean blue scorpion).